Reading from the N-terminus, the 225-residue chain is uncharacterized protein (225 aa).

The helical transmembrane segment at 181–203 threads the bilayer; it reads INIFVVFMFIIYLLFYIISSTVF.

It is found in the cell membrane. This is an uncharacterized protein from Bacillus anthracis.